The following is a 209-amino-acid chain: Large ribosomal subunit protein uL3 (209 aa).

Glutamine 150 carries the post-translational modification N5-methylglutamine.

This sequence belongs to the universal ribosomal protein uL3 family. As to quaternary structure, part of the 50S ribosomal subunit. Forms a cluster with proteins L14 and L19. In terms of processing, methylated by PrmB.

In terms of biological role, one of the primary rRNA binding proteins, it binds directly near the 3'-end of the 23S rRNA, where it nucleates assembly of the 50S subunit. This chain is Large ribosomal subunit protein uL3, found in Escherichia coli O139:H28 (strain E24377A / ETEC).